Consider the following 109-residue polypeptide: FK506-binding protein (109 aa).

The PPIase FKBP-type domain maps to 20-108 (GKEITVHYTG…IFEVELLKVY (89 aa)).

It belongs to the FKBP-type PPIase family.

The enzyme catalyses [protein]-peptidylproline (omega=180) = [protein]-peptidylproline (omega=0). Its function is as follows. PPIases accelerate the folding of proteins. This chain is FK506-binding protein (fbp), found in Neisseria meningitidis serogroup C.